Reading from the N-terminus, the 151-residue chain is Monooxygenase nsrQ (151 aa).

It belongs to the avfA family.

It functions in the pathway secondary metabolite biosynthesis. Its function is as follows. Monooxygenase; part of the gene cluster that mediates the biosynthesis of the tetrahydroxanthone dimer neosartorin, which exhibits antibacterial activity. The two different monomeric units appear to be synthesized by the same set of enzymes, among which the Baeyer-Villiger monooxygenase nsrF is the key enzyme for the divergence of the biosynthetic routes. The pathway begins with the synthesis of atrochrysone thioester by the polyketide synthase nsrB. The atrochrysone carboxyl ACP thioesterase nsrC then breaks the thioester bond and releases the atrochrysone carboxylic acid from AacuL. Atrochrysone carboxylic acid is decarboxylated by the decarboxylase nsrE, and oxidized by the anthrone oxygenase nsrD to yield emodin. Emodin is then reduced to emodin hydroquinone by the oxidoreductase nsrR. A-ring reduction by the short chain dehydrogenase nsrJ, dehydration by the scytalone dehydratase-like protein nsrI and probable spontaneous re-oxidation, results in overall deoxygenation to chrysophanol. The Baeyer-Villiger monooxygenase nsrF accepts chrysophanol as a substrate to insert one oxygen atom at two different positions to yield the precursors of both monomric units. NsrF is promiscuous/flexible in interacting with the 2 (non methylated and methylated) aromatic rings of chrysophanol, thus diverging the biosynthetic pathway at this point. After the hydrolysis of the lactones, methylesterification by the methyltransferase nsrG yields respectively moniliphenone and 2,2',6'-trihydroxy-4-methyl-6-methoxya-cyldiphenylmethanone. The next steps are the hydroxylation by the FAD-dependent monooxygenase nsrK, followed by isomerization by the monooxygenase nsrQ. The short chain dehydrogenase/reductase nsrO then catalyzes the C-5 ketoreduction to give the xanthone skeleton of blennolide C and 5-acetylblennolide A. The acetyltransferase nsrL has a strict substrate specificity and uses only blennolide A but not blennolide C to yield 5-acetylblennolide A as the single-acetylated product. In the final step of the biosynthesis, the heterodimerization of the 2 xanthones, blennolide C and 5-acetylblennolide A, is catalyzed by the cytochrome P450 monooxygenase nsrP. NsrP can utilize at least three different xanthones as its substrates to perform the dimerization reaction. The chain is Monooxygenase nsrQ from Aspergillus novofumigatus (strain IBT 16806).